We begin with the raw amino-acid sequence, 539 residues long: Membrane protein insertase YidC (539 aa).

5 helical membrane-spanning segments follow: residues 6-26 (TLLVLLLALVSFLLFQQWQVA), 341-361 (SVIQSFVGNWGVAIICLTFIV), 416-436 (LGGCLPLILQMPIFIALYWAL), 454-474 (LSAQDPYFILPLLMGGSMFLI), and 495-515 (PVMFTFFFLWFPSGLVLYWLV).

It belongs to the OXA1/ALB3/YidC family. Type 1 subfamily. Interacts with the Sec translocase complex via SecD. Specifically interacts with transmembrane segments of nascent integral membrane proteins during membrane integration.

The protein localises to the cell inner membrane. In terms of biological role, required for the insertion and/or proper folding and/or complex formation of integral membrane proteins into the membrane. Involved in integration of membrane proteins that insert both dependently and independently of the Sec translocase complex, as well as at least some lipoproteins. Aids folding of multispanning membrane proteins. This is Membrane protein insertase YidC from Vibrio vulnificus (strain YJ016).